A 97-amino-acid polypeptide reads, in one-letter code: Aspartyl/glutamyl-tRNA(Asn/Gln) amidotransferase subunit C (97 aa).

The interval 58–78 is disordered; that stretch reads LPQGRLRKDTPRDPLDRENAL. Positions 63–77 are enriched in basic and acidic residues; the sequence is LRKDTPRDPLDRENA.

Belongs to the GatC family. In terms of assembly, heterotrimer of A, B and C subunits.

It catalyses the reaction L-glutamyl-tRNA(Gln) + L-glutamine + ATP + H2O = L-glutaminyl-tRNA(Gln) + L-glutamate + ADP + phosphate + H(+). The enzyme catalyses L-aspartyl-tRNA(Asn) + L-glutamine + ATP + H2O = L-asparaginyl-tRNA(Asn) + L-glutamate + ADP + phosphate + 2 H(+). Allows the formation of correctly charged Asn-tRNA(Asn) or Gln-tRNA(Gln) through the transamidation of misacylated Asp-tRNA(Asn) or Glu-tRNA(Gln) in organisms which lack either or both of asparaginyl-tRNA or glutaminyl-tRNA synthetases. The reaction takes place in the presence of glutamine and ATP through an activated phospho-Asp-tRNA(Asn) or phospho-Glu-tRNA(Gln). This chain is Aspartyl/glutamyl-tRNA(Asn/Gln) amidotransferase subunit C, found in Saccharolobus islandicus (strain Y.N.15.51 / Yellowstone #2) (Sulfolobus islandicus).